Consider the following 246-residue polypeptide: Adenosylcobinamide-GDP ribazoletransferase (246 aa).

Helical transmembrane passes span I34–L54, C59–F79, G113–L133, I136–L156, T181–L201, and A203–G223.

This sequence belongs to the CobS family. Requires Mg(2+) as cofactor.

The protein resides in the cell inner membrane. It catalyses the reaction alpha-ribazole + adenosylcob(III)inamide-GDP = adenosylcob(III)alamin + GMP + H(+). It carries out the reaction alpha-ribazole 5'-phosphate + adenosylcob(III)inamide-GDP = adenosylcob(III)alamin 5'-phosphate + GMP + H(+). It participates in cofactor biosynthesis; adenosylcobalamin biosynthesis; adenosylcobalamin from cob(II)yrinate a,c-diamide: step 7/7. Functionally, joins adenosylcobinamide-GDP and alpha-ribazole to generate adenosylcobalamin (Ado-cobalamin). Also synthesizes adenosylcobalamin 5'-phosphate from adenosylcobinamide-GDP and alpha-ribazole 5'-phosphate. The chain is Adenosylcobinamide-GDP ribazoletransferase from Klebsiella pneumoniae subsp. pneumoniae (strain ATCC 700721 / MGH 78578).